The chain runs to 514 residues: MLFLRAAVLPGFWLPRVRRVQLVRSPAVTLPSPVRTVHAGSRVWGSAWAGGGPVRGGGEEDPREDEEEEEDELLRAPPLLPLDTQRVCVLHPDVKRPAGKKPRSTAEWQVAEAAALVRALPGWSVASTLVVPSAAPGSRLVFGKGNFQDVTEKIKGCQDITSVFLNVERMAPPTKKELESAWGLRVFDRFTLVLHIFRCNARTREARMQLALAEIPLLRSSVNTDSGQQDQQGWGSRYIMGSGESPTELRARALRDRELRLRRVLERLRDKRRLMRKERVRREFPVVSVVGYTNCGKTTLIQALTGEAALQPRDQPFATLDVTVHAGLLPSRLRILYVDTIGFLSQLPHNLIHAFSATLEDVAYSDVLVHVTDVSHPDAELQKATVLSTLRGLHLPPALLESALEVHSKVDLVPGYTPPCSGALAVSAISGRGLDELKAALEASVLRATGRQVLTLCVRLGGPQLGWLYKEAVVQQVQELPEGDAAHVTVVITQAAYGRFRKLFPIDAPSALPH.

Positions 48 to 71 (WAGGGPVRGGGEEDPREDEEEEED) are disordered. Residues 59 to 71 (EEDPREDEEEEED) are compositionally biased toward acidic residues. One can recognise a Hflx-type G domain in the interval 285-449 (PVVSVVGYTN…ALEASVLRAT (165 aa)). Residues Thr298 and Thr319 each contribute to the Mg(2+) site.

The protein belongs to the TRAFAC class OBG-HflX-like GTPase superfamily. HflX GTPase family. The cofactor is Mg(2+).

This chain is Putative GTP-binding protein 6 (Gtpbp6), found in Mus musculus (Mouse).